Here is a 572-residue protein sequence, read N- to C-terminus: Mitochondrial chaperone TCM62 (572 aa).

The transit peptide at 1–16 directs the protein to the mitochondrion; that stretch reads MLRNCLRKLGNHQTKC. Over 17–471 the chain is Mitochondrial matrix; that stretch reads SVKTLHTPIY…KANEPNFMTK (455 aa). The chain crosses the membrane as a helical span at residues 472–488; that stretch reads VGINAVLSAVILPSEVA. The Mitochondrial intermembrane segment spans residues 489-572; that stretch reads FKNAYGYNYY…VYKKPERHKA (84 aa).

Belongs to the chaperonin (HSP60) family. In terms of assembly, forms a high molecular mass protein complex of approximately 850 kDa.

Its subcellular location is the mitochondrion inner membrane. In terms of biological role, chaperone. Required for the assembly of succinate dehydrogenase subunits. Ensures mitochondrial gene expression at elevated temperatures and prevents heat-aggregation of the ribosomal subunit VAR1. This is Mitochondrial chaperone TCM62 (TCM62) from Saccharomyces cerevisiae (strain ATCC 204508 / S288c) (Baker's yeast).